A 364-amino-acid polypeptide reads, in one-letter code: Spermidine/putrescine import ATP-binding protein PotA (364 aa).

An ABC transporter domain is found at 5 to 235 (LSFKDVSKGF…PVNRFVADFI (231 aa)). Residue 37–44 (GPSGCGKT) coordinates ATP.

The protein belongs to the ABC transporter superfamily. Spermidine/putrescine importer (TC 3.A.1.11.1) family. As to quaternary structure, the complex is composed of two ATP-binding proteins (PotA), two transmembrane proteins (PotB and PotC) and a solute-binding protein (PotD).

The protein localises to the cell membrane. It catalyses the reaction ATP + H2O + polyamine-[polyamine-binding protein]Side 1 = ADP + phosphate + polyamineSide 2 + [polyamine-binding protein]Side 1.. Part of the ABC transporter complex PotABCD involved in spermidine/putrescine import. Responsible for energy coupling to the transport system. This is Spermidine/putrescine import ATP-binding protein PotA from Staphylococcus epidermidis (strain ATCC 12228 / FDA PCI 1200).